The sequence spans 275 residues: LexA repressor (275 aa).

The interval 1-50 (MKRSTPRPARSQAALTTSSEESPDRVERGGDGVATVTDFPDGPPDETGLT) is disordered. A DNA-binding region (H-T-H motif) is located at residues 73–93 (MREIGEAVGLTSTSSVAHQLM). Residues 114 to 151 (RSAESAVPDASAGHSPAADRAPSARRPPRGPSPIDSNP) form a disordered region. Catalysis depends on for autocatalytic cleavage activity residues S199 and K236.

The protein belongs to the peptidase S24 family. As to quaternary structure, homodimer.

The enzyme catalyses Hydrolysis of Ala-|-Gly bond in repressor LexA.. In terms of biological role, represses a number of genes involved in the response to DNA damage (SOS response), including recA and lexA. In the presence of single-stranded DNA, RecA interacts with LexA causing an autocatalytic cleavage which disrupts the DNA-binding part of LexA, leading to derepression of the SOS regulon and eventually DNA repair. This Acidothermus cellulolyticus (strain ATCC 43068 / DSM 8971 / 11B) protein is LexA repressor.